A 663-amino-acid chain; its full sequence is (R)-specific secondary-alkylsulfatase (663 aa).

Residues 1–28 (MSRFIRASQRRTLLATLIAATLAQPLLA) form the signal peptide. H179, H181, D183, and H184 together coordinate Zn(2+). Residue Q232 participates in sulfate binding. 2 residues coordinate Zn(2+): E291 and D310. Residues 318 to 323 (NLLTPR) and R328 contribute to the sulfate site. A Zn(2+)-binding site is contributed by H355. Position 417 (Y417) interacts with sulfate.

This sequence belongs to the metallo-beta-lactamase superfamily. Type III sulfatase family. In terms of assembly, homodimer.

The catalysed reaction is an (R)-secondary-alkyl sulfate + H2O = an (S)-secondary-alcohol + sulfate.. Alkylsulfatase that catalyzes the enantioselective hydrolysis of secondary-alkylsulfates with strict inversion of configuration, leading to the formation of homochiral (S)-configurated alcohols and nonreacted sulfate esters. The substrate spectrum includes a range of linear, branched or cyclic sec-alkylsulfates. Can use sec-alkylsulfate esters bearing aromatic, olefinic and acetylenic moieties. Acts by cleaving the C-O bond, resulting in inversion at the carbon. The protein is (R)-specific secondary-alkylsulfatase of Pseudomonas sp.